A 389-amino-acid polypeptide reads, in one-letter code: Cellobiose 2-epimerase (389 aa).

It belongs to the cellobiose 2-epimerase family. Monomer.

It catalyses the reaction D-cellobiose = beta-D-glucosyl-(1-&gt;4)-D-mannopyranose. Catalyzes the reversible epimerization of cellobiose to 4-O-beta-D-glucopyranosyl-D-mannose (Glc-Man). Catalyzes epimerization but also isomerization for beta-1,4- and alpha-1,4-gluco-oligosaccharides. Can use cellobiose, lactose, cellotriose, maltose and maltotriose. This Dictyoglomus turgidum (strain DSM 6724 / Z-1310) protein is Cellobiose 2-epimerase.